Here is a 942-residue protein sequence, read N- to C-terminus: DNA mismatch repair protein MSH2 (942 aa).

Gly-667–Ser-674 provides a ligand contact to ATP.

It belongs to the DNA mismatch repair MutS family. In terms of assembly, heterodimer of MSH2 and MSH6 (GTBP).

It is found in the nucleus. Involved in postreplication mismatch repair. Binds specifically to DNA containing mismatched nucleotides thus providing a target for the excision repair processes characteristic of postreplication mismatch repair. In Zea mays (Maize), this protein is DNA mismatch repair protein MSH2 (MUS1).